A 405-amino-acid polypeptide reads, in one-letter code: Argininosuccinate synthase (405 aa).

Residues 10–18 (AYSGGLDTS) and alanine 37 contribute to the ATP site. 2 residues coordinate L-citrulline: tyrosine 88 and serine 93. Glycine 118 is an ATP binding site. 3 residues coordinate L-aspartate: threonine 120, asparagine 124, and aspartate 125. An L-citrulline-binding site is contributed by asparagine 124. Residues arginine 128, serine 179, serine 188, glutamate 264, and tyrosine 276 each contribute to the L-citrulline site.

This sequence belongs to the argininosuccinate synthase family. Type 1 subfamily. Homotetramer.

It is found in the cytoplasm. It carries out the reaction L-citrulline + L-aspartate + ATP = 2-(N(omega)-L-arginino)succinate + AMP + diphosphate + H(+). Its pathway is amino-acid biosynthesis; L-arginine biosynthesis; L-arginine from L-ornithine and carbamoyl phosphate: step 2/3. This chain is Argininosuccinate synthase, found in Pseudomonas syringae pv. tomato (strain ATCC BAA-871 / DC3000).